The following is a 234-amino-acid chain: Multicopy suppressor of SEC21 protein 27 (234 aa).

Topologically, residues 1–47 are cytoplasmic; it reads MQTPLESTDVKLDTLNEPSAHLIEKNVALPKDIFRSYLSYWIYEIAR. Phosphothreonine is present on Thr-3. A helical transmembrane segment spans residues 48–68; sequence YTPVMILSLVIGVLVLLIIFF. The Extracellular portion of the chain corresponds to 69-72; it reads NDNE. The helical transmembrane segment at 73-93 threads the bilayer; that stretch reads ACVFNSAYYAYLSLVVLLIIL. Over 94 to 234 the chain is Cytoplasmic; sequence GDGNPKLVSR…NIDALLKKTE (141 aa). The segment at 231–234 is COPI binding; that stretch reads KKTE.

The protein belongs to the DUP/COS family. As to quaternary structure, interacts with MST28. Binds to coatomer proteins of COPI and SEC23/SEC24 of COPII coated vesicles.

It is found in the endoplasmic reticulum. The protein resides in the golgi apparatus. Its subcellular location is the cytoplasmic vesicle. It localises to the COPI-coated vesicle membrane. The protein localises to the COPII-coated vesicle membrane. Functionally, involved in protein trafficking vesicle formation, probably by stabilizing of coatomer at the Golgi membrane and thus allowing the efficient formation of COPI coated vesicles. The sequence is that of Multicopy suppressor of SEC21 protein 27 (MST27) from Saccharomyces cerevisiae (strain ATCC 204508 / S288c) (Baker's yeast).